The chain runs to 375 residues: MQRLQICVYIYLFVLIVAGPVDLSENSEQKENVEKEGLCNACTWRQNTKSSRIEAIKIQILSKLRLETAPNISRDAVRQLLPRAPPLRELIDQYDVQRDDSSDGSLEDDDYHATTETVIAMPAETDLLMQVEGKPKCCFFKFSSKIQYNKVVKAQLWIYLRPVKTPTTVFVQILRLIKPMKDGTRYTGIRSPKLDMNPGTGIWQSIDVKTVLQNWLKQPESNLGIEIKALDENGHDLAVTFPGPGEDGLNPFLEVKVTDTPKRSRRDFGLDCDEHSTESRCRRYPLTVDFEAFGWDWIIAPKRYKANYCSGECEFVFLQKYPHTHLVHQANPRGSAGPCCTPTKMSPINMLYFNGKEQIIYGKIPAMVVDRCGCS.

A signal peptide spans 1–18 (MQRLQICVYIYLFVLIVA). The propeptide occupies 19 to 266 (GPVDLSENSE…VTDTPKRSRR (248 aa)). N71 carries an N-linked (GlcNAc...) asparagine glycan. 3 disulfide bridges follow: C281–C340, C309–C372, and C313–C374.

It belongs to the TGF-beta family. As to quaternary structure, homodimer; disulfide-linked. Interacts with WFIKKN2, leading to inhibit its activity. Interacts with FSTL3. In terms of processing, synthesized as large precursor molecule that undergoes proteolytic cleavage to generate an N-terminal propeptide and a disulfide linked C-terminal dimer, which is the biologically active molecule. The circulating form consists of a latent complex of the C-terminal dimer and other proteins, including its propeptide, which maintain the C-terminal dimer in a latent, inactive state. Ligand activation requires additional cleavage of the prodomain by a tolloid-like metalloproteinase.

It localises to the secreted. Its function is as follows. Acts specifically as a negative regulator of skeletal muscle growth. This Vulpes vulpes (Red fox) protein is Growth/differentiation factor 8 (MSTN).